The sequence spans 248 residues: Tyrosine recombinase XerD-like (248 aa).

In terms of domain architecture, Core-binding (CB) spans 1 to 72; sequence MKSYIEPFIA…TANQFLYYLY (72 aa). Residues 85–248 enclose the Tyr recombinase domain; that stretch reads DTMKVMRTEK…PVTLEKYYKS (164 aa). Residues Lys-149 and Arg-213 contribute to the active site. The active-site O-(3'-phospho-DNA)-tyrosine intermediate is Tyr-245.

The protein belongs to the 'phage' integrase family. XerD-like subfamily.

Its subcellular location is the cytoplasm. Functionally, putative tyrosine recombinase. Not involved in the cutting and rejoining of the recombining DNA molecules on dif(SL) site. The polypeptide is Tyrosine recombinase XerD-like (Streptococcus pyogenes serotype M3 (strain ATCC BAA-595 / MGAS315)).